A 337-amino-acid polypeptide reads, in one-letter code: 15-cis-phytoene synthase (337 aa).

This sequence belongs to the phytoene/squalene synthase family. Requires ATP as cofactor. It depends on Mn(2+) as a cofactor. Mg(2+) is required as a cofactor.

The catalysed reaction is 2 (2E,6E,10E)-geranylgeranyl diphosphate = 15-cis-phytoene + 2 diphosphate. The protein operates within carotenoid biosynthesis; phytoene biosynthesis. Its function is as follows. Involved in the biosynthesis of carotenoids. Catalyzes the condensation of two molecules of geranylgeranyl diphosphate (GGPP) to give prephytoene diphosphate (PPPP) and the subsequent rearrangement of the cyclopropylcarbinyl intermediate to yield 15-cis-phytoene. In Synechocystis sp. (strain ATCC 27184 / PCC 6803 / Kazusa), this protein is 15-cis-phytoene synthase (crtB).